We begin with the raw amino-acid sequence, 482 residues long: Guanine nucleotide exchange factor SRM1 (482 aa).

The span at 1-11 (MVKRTVATNGD) shows a compositional bias: polar residues. Residues 1–22 (MVKRTVATNGDASGAHRAKKMS) form a disordered region. The Nuclear localization signal signature appears at 15 to 26 (AHRAKKMSKTHA). 7 RCC1 repeats span residues 45 to 101 (PLDI…ALDE), 103 to 152 (SNVW…TPAK), 183 to 238 (NGEV…FLDE), 239 to 291 (EGMV…ALTK), 292 to 347 (DNKL…ILSQ), 349 to 411 (GDLY…AVAQ), and 412 to 466 (NGIA…SGGV). The segment at 128 to 158 (KDMDADDSSDDEDGDLNELESTPAKIPRESF) is disordered. Positions 131–145 (DADDSSDDEDGDLNE) are enriched in acidic residues. Residues Ser-135 and Ser-136 each carry the phosphoserine modification.

In terms of assembly, component of a multicomponent complex composed of six to seven proteins, which has a collective molecular mass greater than 150 kDa. Interacts with GSP1 and YRB2. Post-translationally, phosphorylated; possibly by KSP1.

The protein resides in the nucleus. Guanine nucleotide exchange factor that promotes the exchange of GSP1/GSP2-bound GDP by GTP and controls RNA metabolism and transport. Involved in yeast pheromone response pathway and in mRNA metabolism. Involved in nuclear pore complex (NPC) assembly and required for mRNA and ribosome nuclear export. Binds chromatin and is involved NPC-mediated transcriptional control. In Saccharomyces cerevisiae (strain ATCC 204508 / S288c) (Baker's yeast), this protein is Guanine nucleotide exchange factor SRM1 (SRM1).